A 358-amino-acid chain; its full sequence is Histidinol-phosphate aminotransferase (358 aa).

Lys218 is modified (N6-(pyridoxal phosphate)lysine).

Belongs to the class-II pyridoxal-phosphate-dependent aminotransferase family. Histidinol-phosphate aminotransferase subfamily. Homodimer. It depends on pyridoxal 5'-phosphate as a cofactor.

It carries out the reaction L-histidinol phosphate + 2-oxoglutarate = 3-(imidazol-4-yl)-2-oxopropyl phosphate + L-glutamate. The protein operates within amino-acid biosynthesis; L-histidine biosynthesis; L-histidine from 5-phospho-alpha-D-ribose 1-diphosphate: step 7/9. This chain is Histidinol-phosphate aminotransferase, found in Dehalococcoides mccartyi (strain CBDB1).